The sequence spans 686 residues: Band 4.1-like protein 4A (686 aa).

The region spanning 11–299 (FYCEVLLLDE…EHHTFFRMPD (289 aa)) is the FERM domain. Residue S304 is modified to Phosphoserine. 2 stretches are compositionally biased toward polar residues: residues 332–346 (DLSI…NVVR) and 357–382 (AQTQ…NEGT). The interval 332 to 669 (DLSIQLPRPN…LSTINPAGKP (338 aa)) is disordered. A phosphoserine mark is found at S389, S393, and S402. Polar residues-rich tracts occupy residues 418–428 (GPQSGLYNSSS) and 442–455 (RNLS…SSQL). The segment covering 479–489 (RCNTSSGSESE) has biased composition (low complexity). 2 stretches are compositionally biased toward basic and acidic residues: residues 518–527 (VLRRQKEKNQ) and 547–561 (QAKE…KELV). Residues 588 to 601 (IRHSHSPRSYRQYR) are compositionally biased toward basic residues. Residues 648 to 658 (GSKDSLIEEKS) show a composition bias toward basic and acidic residues.

In terms of tissue distribution, brain, heart, lung, liver and spleen. Not detected in thymus and kidney.

It is found in the cytoplasm. The protein localises to the cytoskeleton. The chain is Band 4.1-like protein 4A from Mus musculus (Mouse).